The following is a 540-amino-acid chain: Glucose-6-phosphate isomerase (540 aa).

Catalysis depends on Glu-350, which acts as the Proton donor. Residues His-381 and Lys-503 contribute to the active site.

This sequence belongs to the GPI family.

It is found in the cytoplasm. It carries out the reaction alpha-D-glucose 6-phosphate = beta-D-fructose 6-phosphate. Its pathway is carbohydrate biosynthesis; gluconeogenesis. It participates in carbohydrate degradation; glycolysis; D-glyceraldehyde 3-phosphate and glycerone phosphate from D-glucose: step 2/4. Catalyzes the reversible isomerization of glucose-6-phosphate to fructose-6-phosphate. The sequence is that of Glucose-6-phosphate isomerase from Paraburkholderia phytofirmans (strain DSM 17436 / LMG 22146 / PsJN) (Burkholderia phytofirmans).